The sequence spans 1077 residues: Mitogen-activated protein kinase kinase kinase 9 (1077 aa).

Residues 1–40 (MESSRSLLGCLASATAAPPGDDATGAGAEEEEDEEEAAAE) are disordered. A compositionally biased stretch (low complexity) spans 14-27 (ATAAPPGDDATGAG). Residues 28-38 (AEEEEDEEEAA) show a composition bias toward acidic residues. One can recognise an SH3 domain in the interval 45 to 109 (AALPYWTAVF…PSNYVTPRSA (65 aa)). The Protein kinase domain occupies 137–405 (LTLEEIIGIG…LTTIEESGFF (269 aa)). ATP is bound by residues 143–151 (IGIGGFGKV) and K164. The Proton acceptor role is filled by D261. 2 positions are modified to phosphothreonine; by autocatalysis: T297 and T298. Phosphoserine; by autocatalysis is present on S301. T305 is modified (phosphothreonine; by autocatalysis). Leucine-zipper stretches follow at residues 423–444 (IQEM…EEEL) and 458–479 (LRRR…ELNI). A compositionally biased stretch (basic residues) spans 491 to 503 (VKKRKGKFRKSRL). Disordered stretches follow at residues 491–511 (VKKR…GNRI), 526–606 (SPTM…TSGD), 646–713 (EDED…KRGG), 748–790 (LPPE…KKEE), 860–971 (RDPN…PRPS), and 986–1011 (SHAR…CFAS). At S526 the chain carries Phosphoserine. Composition is skewed to polar residues over residues 559 to 568 (PGESSKTWGR) and 693 to 709 (PVNS…TNSL). Over residues 755–767 (PPAREEKKRREGL) the composition is skewed to basic and acidic residues. Positions 863 to 880 (NQSLTPTHVTLTAPTQPS) are enriched in polar residues. Over residues 901-915 (GSRSPSSNGMSPSPG) the composition is skewed to low complexity. Residues 987-1011 (HARSASPANSSSTETPSNLDSCFAS) show a composition bias toward polar residues.

It belongs to the protein kinase superfamily. STE Ser/Thr protein kinase family. MAP kinase kinase kinase subfamily. In terms of assembly, homodimer. It depends on Mg(2+) as a cofactor. Post-translationally, autophosphorylation on serine and threonine residues within the activation loop plays a role in enzyme activation. Thr-305 is likely to be the main autophosphorylation site. Autophosphorylation also occurs on Thr-297 and Ser-301. Expressed in cochlea and utricle.

It carries out the reaction L-seryl-[protein] + ATP = O-phospho-L-seryl-[protein] + ADP + H(+). It catalyses the reaction L-threonyl-[protein] + ATP = O-phospho-L-threonyl-[protein] + ADP + H(+). Homodimerization via the leucine zipper domains is required for autophosphorylation of multiple sites in the activation loop and subsequent activation. Autophosphorylation at Thr-305 is the key step in activation of MAP3K9/MLK1 and is required for full phosphorylation. Autophosphorylation at Thr-297 and Ser-301 have been shown to be of secondary importance in the activation of MAP3K9/MLK1. Its function is as follows. Serine/threonine kinase which acts as an essential component of the MAP kinase signal transduction pathway. Plays an important role in the cascades of cellular responses evoked by changes in the environment. Once activated, acts as an upstream activator of the MKK/JNK signal transduction cascade through the phosphorylation of MAP2K4/MKK4 and MAP2K7/MKK7 which in turn activate the JNKs. The MKK/JNK signaling pathway regulates stress response via activator protein-1 (JUN) and GATA4 transcription factors. Also plays a role in mitochondrial death signaling pathway, including the release cytochrome c, leading to apoptosis. This Mus musculus (Mouse) protein is Mitogen-activated protein kinase kinase kinase 9 (Map3k9).